The primary structure comprises 245 residues: DNA repair protein RecO (245 aa).

This sequence belongs to the RecO family.

Involved in DNA repair and RecF pathway recombination. In Pectobacterium atrosepticum (strain SCRI 1043 / ATCC BAA-672) (Erwinia carotovora subsp. atroseptica), this protein is DNA repair protein RecO.